Consider the following 323-residue polypeptide: tRNA dimethylallyltransferase (323 aa).

Residue 18–25 (GPTASGKT) coordinates ATP. 20–25 (TASGKT) provides a ligand contact to substrate. An interaction with substrate tRNA region spans residues 44-47 (DSAL).

Belongs to the IPP transferase family. In terms of assembly, monomer. Mg(2+) serves as cofactor.

The catalysed reaction is adenosine(37) in tRNA + dimethylallyl diphosphate = N(6)-dimethylallyladenosine(37) in tRNA + diphosphate. In terms of biological role, catalyzes the transfer of a dimethylallyl group onto the adenine at position 37 in tRNAs that read codons beginning with uridine, leading to the formation of N6-(dimethylallyl)adenosine (i(6)A). The protein is tRNA dimethylallyltransferase of Blochmanniella floridana.